A 1342-amino-acid chain; its full sequence is DNA-directed RNA polymerase subunit beta (1342 aa).

Belongs to the RNA polymerase beta chain family. In terms of assembly, the RNAP catalytic core consists of 2 alpha, 1 beta, 1 beta' and 1 omega subunit. When a sigma factor is associated with the core the holoenzyme is formed, which can initiate transcription.

The enzyme catalyses RNA(n) + a ribonucleoside 5'-triphosphate = RNA(n+1) + diphosphate. Its function is as follows. DNA-dependent RNA polymerase catalyzes the transcription of DNA into RNA using the four ribonucleoside triphosphates as substrates. This Histophilus somni (strain 129Pt) (Haemophilus somnus) protein is DNA-directed RNA polymerase subunit beta.